Here is a 352-residue protein sequence, read N- to C-terminus: UDP-N-acetylglucosamine--N-acetylmuramyl-(pentapeptide) pyrophosphoryl-undecaprenol N-acetylglucosamine transferase 2 (352 aa).

UDP-N-acetyl-alpha-D-glucosamine is bound by residues 11-13 (SAG), R164, S194, and Q289.

Belongs to the glycosyltransferase 28 family. MurG subfamily.

The protein resides in the cell membrane. The catalysed reaction is di-trans,octa-cis-undecaprenyl diphospho-N-acetyl-alpha-D-muramoyl-L-alanyl-D-glutamyl-meso-2,6-diaminopimeloyl-D-alanyl-D-alanine + UDP-N-acetyl-alpha-D-glucosamine = di-trans,octa-cis-undecaprenyl diphospho-[N-acetyl-alpha-D-glucosaminyl-(1-&gt;4)]-N-acetyl-alpha-D-muramoyl-L-alanyl-D-glutamyl-meso-2,6-diaminopimeloyl-D-alanyl-D-alanine + UDP + H(+). It functions in the pathway cell wall biogenesis; peptidoglycan biosynthesis. In terms of biological role, cell wall formation. Catalyzes the transfer of a GlcNAc subunit on undecaprenyl-pyrophosphoryl-MurNAc-pentapeptide (lipid intermediate I) to form undecaprenyl-pyrophosphoryl-MurNAc-(pentapeptide)GlcNAc (lipid intermediate II). This is UDP-N-acetylglucosamine--N-acetylmuramyl-(pentapeptide) pyrophosphoryl-undecaprenol N-acetylglucosamine transferase 2 from Bacillus thuringiensis subsp. konkukian (strain 97-27).